The primary structure comprises 240 residues: Allene oxide cyclase, chloroplastic (240 aa).

The transit peptide at 1–49 (MAAAAPSRVSVRAAAPGQTGGFAKIRPQVVVAAAARSAGVSGRRARSVR) directs the protein to the chloroplast.

The protein belongs to the allene oxide cyclase family.

It localises to the plastid. Its subcellular location is the chloroplast. It carries out the reaction (9Z,13S,15Z)-12,13-epoxyoctadeca-9,11,15-trienoate = (9S,13S,15Z)-12-oxophyto-10,15-dienoate. Its pathway is lipid metabolism; polyunsaturated fatty acid biosynthesis. Functionally, involved in the production of 12-oxo-phytodienoic acid (OPDA), a precursor of jasmonic acid (JA). Required for the production of JA in response to wounding. Necessary for flower and coleoptile development regulation by light, including blue (BL), red (RL) and far red (FR) lights. Involved in the auxin-mediated signaling pathway leading to growth stimulation. Essential for photodestruction of phyA upon activation by RL and FR. Implicated in responses to salt stress (NaCl). In terms of biological role, confers resistance to incompatible strains of the blast fungus Magnaporthe grisea, jasmonic acid (JA) thus playing a significant role in the resistance to fungal infection. Implicated in riboflavin-induced resistance to the sheath blight Rhizoctonia solani. Required for Pseudomonas fluorescens-mediated JA-dependent induced systemic resistance (ISR). Confers some resistance, independently of the JA pathway but probably via OPDA accumulation, to brown planthopper (BPH, Nilaparvata lugens), a destructive, monophagous, piercing-sucking insect, mainly by reducing its feeding activity and survival rate. Triggers resistance to the chewing insect striped stem borer (SSB) Chilo suppressalis, to the root hemiparasite witchweed Striga hermonthica, and to the root feeder insect rice water weevil Lissorhoptrus oryzophilus, in a JA-dependent manner, by attenuating both the growth mass and growth rate of caterpillars. In Oryza sativa subsp. indica (Rice), this protein is Allene oxide cyclase, chloroplastic.